Reading from the N-terminus, the 473-residue chain is Dihydrolipoyl dehydrogenase (473 aa).

Residues 36–45 (ERYDKLGGVC), K54, and A117 contribute to the FAD site. The cysteines at positions 45 and 50 are disulfide-linked. Residues 182–186 (GSGII), D205, and 270–273 (AIGR) contribute to the NAD(+) site. FAD is bound by residues D313 and A321. Residue H445 is the Proton acceptor of the active site.

The protein belongs to the class-I pyridine nucleotide-disulfide oxidoreductase family. As to quaternary structure, homodimer. It depends on FAD as a cofactor.

It is found in the cytoplasm. The catalysed reaction is N(6)-[(R)-dihydrolipoyl]-L-lysyl-[protein] + NAD(+) = N(6)-[(R)-lipoyl]-L-lysyl-[protein] + NADH + H(+). Functionally, lipoamide dehydrogenase is a component of the alpha-ketoacid dehydrogenase complexes. The protein is Dihydrolipoyl dehydrogenase (lpdA) of Buchnera aphidicola subsp. Acyrthosiphon pisum (strain APS) (Acyrthosiphon pisum symbiotic bacterium).